An 812-amino-acid polypeptide reads, in one-letter code: Probable E3 ubiquitin-protein ligase hulA (812 aa).

Residues 1-109 (MTCSQPNLRV…QMGGDEMLTR (109 aa)) enclose the C2 domain. Disordered regions lie at residues 131 to 235 (NLST…WERR) and 250 to 350 (RTTT…YFVD). 4 stretches are compositionally biased toward polar residues: residues 148–165 (MQPS…ASTP), 174–199 (ADPT…STIV), 214–223 (SRTNLSSFED), and 250–267 (RTTT…QTSR). In terms of domain architecture, WW 1 spans 226 to 259 (GRLPAGWERREDNLGRTYYVDHNTRTTTWTRPSN). The span at 276–291 (LERRAHQSRMLPEDRT) shows a compositional bias: basic and acidic residues. Positions 292–306 (GASSPNLQENQQQAQ) are enriched in polar residues. Residues 307-330 (TPPAGGSASAVSMMATGATTAGTG) are compositionally biased toward low complexity. WW domains are found at residues 330–363 (GELP…DPRR) and 390–423 (GPLP…DPRL). An HECT domain is found at 479 to 812 (SASDLKKRLM…VEETLGFGQE (334 aa)). Cysteine 780 acts as the Glycyl thioester intermediate in catalysis.

This sequence belongs to the RSP5/NEDD4 family. As to quaternary structure, interacts with creD.

It localises to the cytoplasm. The enzyme catalyses S-ubiquitinyl-[E2 ubiquitin-conjugating enzyme]-L-cysteine + [acceptor protein]-L-lysine = [E2 ubiquitin-conjugating enzyme]-L-cysteine + N(6)-ubiquitinyl-[acceptor protein]-L-lysine.. It functions in the pathway protein modification; protein ubiquitination. E3 ubiquitin-protein ligase which accepts ubiquitin from an E2 ubiquitin-conjugating enzyme in the form of a thioester and then directly transfers the ubiquitin to targeted substrates. Probably involved in the regulatory network controlling carbon source utilization. The polypeptide is Probable E3 ubiquitin-protein ligase hulA (hulA) (Aspergillus flavus (strain ATCC 200026 / FGSC A1120 / IAM 13836 / NRRL 3357 / JCM 12722 / SRRC 167)).